The following is a 191-amino-acid chain: Putative manganese efflux pump MntP (191 aa).

A run of 6 helical transmembrane segments spans residues 3–23 (PISILLIGFAMSTDAFAAAIG), 37–57 (LRAGIIFGVIEAITPIIGWLL), 65–85 (VEAFDHWIAFGLLGALGIHMI), 107–129 (WKLALTGFATSIDAMAVGIGLAF), 144–164 (CTLTMVTAGIMFGRVLGSMVG), and 169–189 (IIGGVILVIIGATILYEHLHG).

Belongs to the MntP (TC 9.B.29) family.

Its subcellular location is the cell inner membrane. Functionally, probably functions as a manganese efflux pump. The polypeptide is Putative manganese efflux pump MntP (Stenotrophomonas maltophilia (strain K279a)).